Reading from the N-terminus, the 1027-residue chain is Xyloglucanase (1027 aa).

The first 32 residues, 1–32 (MKTFLGKKLWMASLAVALAAGSFAALPEMTSA), serve as a signal peptide directing secretion. The active-site Nucleophile is the aspartate 70. BNR repeat units follow at residues 134 to 143 (RSTDRGDTWQ), 185 to 196 (WRSSDYGATWSK), 252 to 262 (YRSTDGGATWT), and 357 to 367 (FRSKDGGTTWT). Aspartate 479 serves as the catalytic Proton donor. BNR repeat units follow at residues 537–545 (SSDGGTNWY) and 717–727 (FRSDDGGASWV). The CBM3 domain occupies 876–1027 (PEGSIRIEMY…SGTLQWGIEP (152 aa)).

It belongs to the glycosyl hydrolase 74 family.

Its function is as follows. Hydrolyzes the glucosidic bonds of unbranched Glc residues in tamarind seed xyloglucan, producing XXXG, XLXG, XXLG and XLLG. May have a dual endo- and exo- mode of action towards xyloglucan, or may have an endo-processive mode of action. The protein is Xyloglucanase of Paenibacillus sp.